We begin with the raw amino-acid sequence, 620 residues long: ATP-dependent RNA helicase ROK1 (620 aa).

The segment at 53–115 (SSLDFFGDHP…PLPKSLHTNL (63 aa)) is disordered. Positions 58-70 (FGDHPHPQHKPEP) are enriched in basic and acidic residues. The span at 71-82 (EPESESESDFES) shows a compositional bias: acidic residues. Residues 142–150 (NIHSLWGVQ) carry the Q motif motif. Residues 154–382 (GGCLLEDRDT…KKWLKDGGVR (229 aa)) form the Helicase ATP-binding domain. 167 to 174 (APTGSGKT) is an ATP binding site. Positions 244–292 (ESAPGEAVKTGEDGDSEMKDGEDSGDEEEDEDDNESTGSVDEFAPKVSG) are disordered. Over residues 252–265 (KTGEDGDSEMKDGE) the composition is skewed to basic and acidic residues. The segment covering 266–278 (DSGDEEEDEDDNE) has biased composition (acidic residues). Positions 329–332 (DESD) match the DEAD box motif. One can recognise a Helicase C-terminal domain in the interval 394–556 (TVDQSLLYTG…PVPEYMLDMK (163 aa)). The tract at residues 556–620 (KKPTKNEKKK…GNEEKNDDEE (65 aa)) is disordered. Residues 562–575 (EKKKLAKAPPKRKA) are compositionally biased toward basic residues. Basic and acidic residues-rich tracts occupy residues 582–598 (DLNREAGKKKKQMVEAS) and 605–614 (ERKGKGGNEE).

This sequence belongs to the DEAD box helicase family. DDX52/ROK1 subfamily. In terms of assembly, interacts with the U3 snoRNA and is associated with the 90S and 40S pre-ribosomes.

Its subcellular location is the nucleus. It is found in the nucleolus. It carries out the reaction ATP + H2O = ADP + phosphate + H(+). Functionally, ATP-dependent RNA helicase involved in 40S ribosomal subunit biogenesis. Required for the processing and cleavage of 35S pre-rRNA at sites A0, A1, and A2, leading to mature 18S rRNA. The chain is ATP-dependent RNA helicase ROK1 (ROK1) from Cryptococcus neoformans var. neoformans serotype D (strain B-3501A) (Filobasidiella neoformans).